The primary structure comprises 456 residues: tRNA modification GTPase MnmE (456 aa).

Residues Arg-21, Glu-85, and Lys-124 each coordinate (6S)-5-formyl-5,6,7,8-tetrahydrofolate. Positions 220 to 379 constitute a TrmE-type G domain; it reads QLRIVLYGEP…LLDEIQKKAA (160 aa). A K(+)-binding site is contributed by Asn-230. GTP-binding positions include 230–235, 249–255, and 274–277; these read NTGKSS, SEIPGTT, and DTAG. Residue Ser-234 coordinates Mg(2+). K(+) is bound by residues Ser-249, Ile-251, and Thr-254. Mg(2+) is bound at residue Thr-255. Residue Lys-456 participates in (6S)-5-formyl-5,6,7,8-tetrahydrofolate binding.

The protein belongs to the TRAFAC class TrmE-Era-EngA-EngB-Septin-like GTPase superfamily. TrmE GTPase family. As to quaternary structure, homodimer. Heterotetramer of two MnmE and two MnmG subunits. Requires K(+) as cofactor.

Its subcellular location is the cytoplasm. Its function is as follows. Exhibits a very high intrinsic GTPase hydrolysis rate. Involved in the addition of a carboxymethylaminomethyl (cmnm) group at the wobble position (U34) of certain tRNAs, forming tRNA-cmnm(5)s(2)U34. The chain is tRNA modification GTPase MnmE from Leptospira borgpetersenii serovar Hardjo-bovis (strain JB197).